The chain runs to 341 residues: L-threonine 3-dehydrogenase (341 aa).

Position 38 (cysteine 38) interacts with Zn(2+). Active-site charge relay system residues include threonine 40 and histidine 43. Zn(2+)-binding residues include histidine 63, glutamate 64, cysteine 93, cysteine 96, cysteine 99, and cysteine 107. NAD(+)-binding positions include isoleucine 175, aspartate 195, arginine 200, 262–264 (LGI), and 286–287 (IY).

The protein belongs to the zinc-containing alcohol dehydrogenase family. Homotetramer. Zn(2+) serves as cofactor.

Its subcellular location is the cytoplasm. It catalyses the reaction L-threonine + NAD(+) = (2S)-2-amino-3-oxobutanoate + NADH + H(+). Its pathway is amino-acid degradation; L-threonine degradation via oxydo-reductase pathway; glycine from L-threonine: step 1/2. In terms of biological role, catalyzes the NAD(+)-dependent oxidation of L-threonine to 2-amino-3-ketobutyrate. The polypeptide is L-threonine 3-dehydrogenase (Salmonella choleraesuis (strain SC-B67)).